The chain runs to 201 residues: Diadenylate cyclase CdaS (201 aa).

Residues 54–201 (QTLAATYYIQ…LNGILYTISL (148 aa)) enclose the DAC domain.

This sequence belongs to the adenylate cyclase family. DacB/CdaS subfamily. In terms of assembly, probably forms a homohexamer. It depends on Mg(2+) as a cofactor.

The enzyme catalyses 2 ATP = 3',3'-c-di-AMP + 2 diphosphate. One of 3 paralogous diadenylate cyclases (DAC) in this bacteria catalyzing the condensation of 2 ATP molecules into cyclic di-AMP (c-di-AMP). It has slow DAC activity with ADP as a substrate and may have weak ADPase activity. Required for efficient spore formation, whereas in B.subtilis, it is required for efficient spore germination. It is produced under the control of different sigma factors in the two bacteria. It is also required for parasporal crystal formation. The chain is Diadenylate cyclase CdaS from Bacillus thuringiensis (strain BMB171).